We begin with the raw amino-acid sequence, 857 residues long: Leucine--tRNA ligase (857 aa).

The 'HIGH' region signature appears at P42 to H52. The 'KMSKS' region motif lies at K620 to S624. K623 serves as a coordination point for ATP.

This sequence belongs to the class-I aminoacyl-tRNA synthetase family.

Its subcellular location is the cytoplasm. The catalysed reaction is tRNA(Leu) + L-leucine + ATP = L-leucyl-tRNA(Leu) + AMP + diphosphate. This chain is Leucine--tRNA ligase, found in Thiobacillus denitrificans (strain ATCC 25259 / T1).